The primary structure comprises 150 residues: UPF0178 protein Sbal195_1808 (150 aa).

It belongs to the UPF0178 family.

This Shewanella baltica (strain OS195) protein is UPF0178 protein Sbal195_1808.